The primary structure comprises 530 residues: 2,3-bisphosphoglycerate-independent phosphoglycerate mutase (530 aa).

Mn(2+)-binding residues include D15 and S65. S65 functions as the Phosphoserine intermediate in the catalytic mechanism. Residues H126, 155–156 (RD), R187, R193, 257–260 (RPDR), and K330 contribute to the substrate site. Residues D397, H401, D438, H439, and H456 each contribute to the Mn(2+) site.

Belongs to the BPG-independent phosphoglycerate mutase family. As to quaternary structure, monomer. It depends on Mn(2+) as a cofactor.

It catalyses the reaction (2R)-2-phosphoglycerate = (2R)-3-phosphoglycerate. It participates in carbohydrate degradation; glycolysis; pyruvate from D-glyceraldehyde 3-phosphate: step 3/5. Functionally, catalyzes the interconversion of 2-phosphoglycerate and 3-phosphoglycerate. In Synechococcus sp. (strain JA-2-3B'a(2-13)) (Cyanobacteria bacterium Yellowstone B-Prime), this protein is 2,3-bisphosphoglycerate-independent phosphoglycerate mutase.